Reading from the N-terminus, the 262-residue chain is MSPMARKPLIAGNWKMNLDHQQAIGTVQKLAFALHKDYYEKVDVAVIVPFTDLRSVQTLVEGDKLQITYGAQDVSQHESGAYTGEVSASMLAKLNCSWVVVGHSERREYHNETDELVAAKAKAALSKGISPIVCVGEPLEIREAGTHVDYVVEQTRASLAGLSADELANTVIAYEPVWAIGTGKVASAADAQEVCKAIRGLVTELAGEEVAEGMRILYGGSVKAETIAEIVSQPDVDGGLVGGASLDGEAFAKLAANAANAV.

13–15 (NWK) contributes to the substrate binding site. H103 acts as the Electrophile in catalysis. The Proton acceptor role is filled by E175. Substrate contacts are provided by residues G181, S221, and 242-243 (GG).

This sequence belongs to the triosephosphate isomerase family. Homodimer.

Its subcellular location is the cytoplasm. The enzyme catalyses D-glyceraldehyde 3-phosphate = dihydroxyacetone phosphate. It participates in carbohydrate biosynthesis; gluconeogenesis. It functions in the pathway carbohydrate degradation; glycolysis; D-glyceraldehyde 3-phosphate from glycerone phosphate: step 1/1. Its function is as follows. Involved in the gluconeogenesis. Catalyzes stereospecifically the conversion of dihydroxyacetone phosphate (DHAP) to D-glyceraldehyde-3-phosphate (G3P). This chain is Triosephosphate isomerase, found in Corynebacterium efficiens (strain DSM 44549 / YS-314 / AJ 12310 / JCM 11189 / NBRC 100395).